We begin with the raw amino-acid sequence, 272 residues long: Proteasome subunit beta type-5 (272 aa).

Positions 1 to 55 are cleaved as a propeptide — removed in mature form; that stretch reads MKLDTSGLESTAPIFRRSDFVFDGLQMTPSFDLPNPTDFDGFQKEAVQMVKPAKG. T56 serves as the catalytic Nucleophile.

Belongs to the peptidase T1B family. As to quaternary structure, the 26S proteasome consists of a 20S proteasome core and two 19S regulatory subunits. The 20S proteasome core is composed of 28 subunits that are arranged in four stacked rings, resulting in a barrel-shaped structure. The two end rings are each formed by seven alpha subunits, and the two central rings are each formed by seven beta subunits. The catalytic chamber with the active sites is on the inside of the barrel.

It is found in the cytoplasm. The protein resides in the nucleus. It catalyses the reaction Cleavage of peptide bonds with very broad specificity.. Functionally, the proteasome is a multicatalytic proteinase complex which is characterized by its ability to cleave peptides with Arg, Phe, Tyr, Leu, and Glu adjacent to the leaving group at neutral or slightly basic pH. The proteasome has an ATP-dependent proteolytic activity. The protein is Proteasome subunit beta type-5 of Spinacia oleracea (Spinach).